Consider the following 671-residue polypeptide: Alpha-1,4-glucan:maltose-1-phosphate maltosyltransferase (671 aa).

Residues K252, Q312, and D347 each coordinate alpha-maltose 1-phosphate. Residue D382 is the Nucleophile of the active site. N383 serves as a coordination point for alpha-maltose 1-phosphate. E411 serves as the catalytic Proton donor. Position 521–522 (521–522) interacts with alpha-maltose 1-phosphate; that stretch reads KY.

Belongs to the glycosyl hydrolase 13 family. GlgE subfamily. In terms of assembly, homodimer.

The catalysed reaction is alpha-maltose 1-phosphate + [(1-&gt;4)-alpha-D-glucosyl](n) = [(1-&gt;4)-alpha-D-glucosyl](n+2) + phosphate. Functionally, maltosyltransferase that uses maltose 1-phosphate (M1P) as the sugar donor to elongate linear or branched alpha-(1-&gt;4)-glucans. Is involved in a branched alpha-glucan biosynthetic pathway from trehalose, together with TreS, Mak and GlgB. The sequence is that of Alpha-1,4-glucan:maltose-1-phosphate maltosyltransferase from Corynebacterium pseudotuberculosis (strain 1002).